The sequence spans 434 residues: GTPase Obg (434 aa).

Positions 1–159 constitute an Obg domain; sequence MQFIDRCQIK…KTVRLELKYL (159 aa). The OBG-type G domain maps to 160 to 329; that stretch reads ANVGIVGYPN…LVDRVFDLYQ (170 aa). Residues 166 to 173, 191 to 195, 212 to 215, 282 to 285, and 310 to 312 contribute to the GTP site; these read GYPNAGKS, FTTLV, DIPG, NKMD, and ISA. The Mg(2+) site is built by S173 and T193. The OCT domain occupies 356–434; the sequence is EKTIDDDPLD…ICDYEYLIDE (79 aa).

It belongs to the TRAFAC class OBG-HflX-like GTPase superfamily. OBG GTPase family. Monomer. It depends on Mg(2+) as a cofactor.

It is found in the cytoplasm. In terms of biological role, an essential GTPase which binds GTP, GDP and possibly (p)ppGpp with moderate affinity, with high nucleotide exchange rates and a fairly low GTP hydrolysis rate. Plays a role in control of the cell cycle, stress response, ribosome biogenesis and in those bacteria that undergo differentiation, in morphogenesis control. The chain is GTPase Obg from Mycoplasmoides gallisepticum (strain R(low / passage 15 / clone 2)) (Mycoplasma gallisepticum).